We begin with the raw amino-acid sequence, 699 residues long: MSNNSERSQGKCPVMHGGTTSGEQANMAWWPKSLNLDMAALKQDVTALMTDSQDWWPADWGHYGALMIRMAWHSAGTYRIADGRGGGSTGNQRFAPLNSWPDNANLDKARRLLWPIKKKYGNKISWADLIILAGTVAYESMGLKTFGFAFGREDIWHPEKDIYWGAEKEWLAPSSKPGGRYSGERDLDNPLAAVMMGLIYVNPEGVDGNPDPLKTAKDMRVTFARMAMDDEETVALTAGGHTVGKCHGNGDARLLGPEPEGAAVEDQGLGWLNKTQRGIGRNAVTSGIEGAWTTHPTRWDNGYFYLLFNYEWELKKSPAGAWQWEPVNIREEDKPVDVEDPAIRHNPIMTDADMALKFDPEYRKIAERFRADPAAFSDAFARAWFKLTHRDLGPKTRYVGPYVPAEDLIWQDPVPAGRTDYDVAAVKASIAASGLSISDMVSTAWDSARTFRGSDLRGGANGARIRLAPQNEWEGNEPARLARVLKVLEPIAAASQISVADVIVLAGNLGVELAARAAGVEVTVPFSPGRGDASQARTDVASFDVLEPLADGYRNWLKKDYAVTAEELMLDRTQLMGLTAHEMTVLVGGMRVLGTNHGGTRHGVFTEREGALTNDYFVNLTDMANTWHPSGDRLYEVRDRKSGKVKWTATRIDLVFGSNSVLRAYAEVYAQDDNKEKFVCDFISAWNKVMNADRFDLMS.

The tryptophyl-tyrosyl-methioninium (Trp-Tyr) (with M-226) cross-link spans 72–200 (WHSAGTYRIA…LAAVMMGLIY (129 aa)). H73 functions as the Proton acceptor in the catalytic mechanism. Positions 200–226 (YVNPEGVDGNPDPLKTAKDMRVTFARM) form a cross-link, tryptophyl-tyrosyl-methioninium (Tyr-Met) (with W-72). H241 provides a ligand contact to heme b.

This sequence belongs to the peroxidase family. Peroxidase/catalase subfamily. In terms of assembly, homodimer or homotetramer. Heme b is required as a cofactor. Formation of the three residue Trp-Tyr-Met cross-link is important for the catalase, but not the peroxidase activity of the enzyme.

The enzyme catalyses H2O2 + AH2 = A + 2 H2O. It carries out the reaction 2 H2O2 = O2 + 2 H2O. Functionally, bifunctional enzyme with both catalase and broad-spectrum peroxidase activity. In Aeromonas salmonicida (strain A449), this protein is Catalase-peroxidase.